The sequence spans 328 residues: 4-hydroxy-3-methylbut-2-enyl diphosphate reductase (328 aa).

[4Fe-4S] cluster is bound at residue Cys24. 2 residues coordinate (2E)-4-hydroxy-3-methylbut-2-enyl diphosphate: His55 and His88. 2 residues coordinate dimethylallyl diphosphate: His55 and His88. Isopentenyl diphosphate contacts are provided by His55 and His88. Cys110 lines the [4Fe-4S] cluster pocket. A (2E)-4-hydroxy-3-methylbut-2-enyl diphosphate-binding site is contributed by His138. Residue His138 participates in dimethylallyl diphosphate binding. An isopentenyl diphosphate-binding site is contributed by His138. Glu140 functions as the Proton donor in the catalytic mechanism. Residue Thr178 participates in (2E)-4-hydroxy-3-methylbut-2-enyl diphosphate binding. Cys208 is a [4Fe-4S] cluster binding site. (2E)-4-hydroxy-3-methylbut-2-enyl diphosphate-binding residues include Ser236, Ser237, Asn238, and Ser279. Dimethylallyl diphosphate is bound by residues Ser236, Ser237, Asn238, and Ser279. Isopentenyl diphosphate-binding residues include Ser236, Ser237, Asn238, and Ser279.

It belongs to the IspH family. [4Fe-4S] cluster is required as a cofactor.

It carries out the reaction isopentenyl diphosphate + 2 oxidized [2Fe-2S]-[ferredoxin] + H2O = (2E)-4-hydroxy-3-methylbut-2-enyl diphosphate + 2 reduced [2Fe-2S]-[ferredoxin] + 2 H(+). The catalysed reaction is dimethylallyl diphosphate + 2 oxidized [2Fe-2S]-[ferredoxin] + H2O = (2E)-4-hydroxy-3-methylbut-2-enyl diphosphate + 2 reduced [2Fe-2S]-[ferredoxin] + 2 H(+). It participates in isoprenoid biosynthesis; dimethylallyl diphosphate biosynthesis; dimethylallyl diphosphate from (2E)-4-hydroxy-3-methylbutenyl diphosphate: step 1/1. It functions in the pathway isoprenoid biosynthesis; isopentenyl diphosphate biosynthesis via DXP pathway; isopentenyl diphosphate from 1-deoxy-D-xylulose 5-phosphate: step 6/6. Its function is as follows. Catalyzes the conversion of 1-hydroxy-2-methyl-2-(E)-butenyl 4-diphosphate (HMBPP) into a mixture of isopentenyl diphosphate (IPP) and dimethylallyl diphosphate (DMAPP). Acts in the terminal step of the DOXP/MEP pathway for isoprenoid precursor biosynthesis. This chain is 4-hydroxy-3-methylbut-2-enyl diphosphate reductase, found in Ehrlichia ruminantium (strain Welgevonden).